An 87-amino-acid polypeptide reads, in one-letter code: Small ribosomal subunit protein bS18 (87 aa).

This sequence belongs to the bacterial ribosomal protein bS18 family. Part of the 30S ribosomal subunit. Forms a tight heterodimer with protein bS6.

Its function is as follows. Binds as a heterodimer with protein bS6 to the central domain of the 16S rRNA, where it helps stabilize the platform of the 30S subunit. This chain is Small ribosomal subunit protein bS18, found in Oleidesulfovibrio alaskensis (strain ATCC BAA-1058 / DSM 17464 / G20) (Desulfovibrio alaskensis).